A 1118-amino-acid chain; its full sequence is Repetin (1118 aa).

An S-100-like region spans residues 1–91; that stretch reads MPQLLNSILN…VQACHHKLDS (91 aa). EF-hand domains are found at residues 13–48 and 49–84; these read KVFQ…LRRP and NDPE…LVQA. Residues S27, E32, D62, D64, N66, Y68, and E73 each coordinate Ca(2+). The disordered stretch occupies residues 94–1118; the sequence is YGSRTSSQKE…YVQEQAAYQY (1025 aa). Residues 100–115 show a composition bias toward basic and acidic residues; it reads SQKEHDQEGTRSHKFS. The segment covering 138–148 has biased composition (polar residues); it reads SEGQHQNVQHD. 2 stretches are compositionally biased toward basic and acidic residues: residues 149-164 and 172-186; these read QSQR…DTDP and FHGD…RQDT. The span at 237 to 252 shows a compositional bias: low complexity; it reads GQSKTSGQQSSHGQSG. Over residues 259-299 the composition is skewed to polar residues; the sequence is YSSQTSQQESDSYEQYGSQHQKSGNSQTERQGQNSQYGQTN. 48 tandem repeats follow at residues 273–284, 285–296, 297–308, 309–320, 321–332, 333–344, 345–356, 357–368, 369–380, 381–392, 393–404, 405–416, 417–428, 429–440, 441–452, 453–464, 465–476, 477–488, 489–500, 501–512, 513–524, 525–536, 537–548, 549–560, 561–572, 573–584, 585–596, 597–608, 609–620, 621–632, 633–644, 645–656, 657–668, 669–680, 681–692, 693–704, 705–716, 717–728, 729–740, 741–752, 753–764, 765–776, 777–788, 789–800, 801–812, 813–824, 825–836, and 837–848. Positions 273–848 are 48 X 12 AA approximate tandem repeats of Q-[KT]-[GD]-[RS]-Q-[DG]-Q-S-[PS]-H-X-G; that stretch reads QYGSQHQKSG…DRQSQSSHCG (576 aa). Residues 321 to 764 are 22 X 12 AA approximate tandem repeats of Q-K-G-R-Q-D-Q-S-P-H-Q-G; it reads QKGRKDQSFQ…GRQDQSSHQG (444 aa). Composition is skewed to basic and acidic residues over residues 347-363 and 371-387; these read GRQD…RQDQ. The segment covering 434–466 has biased composition (polar residues); sequence DQSSHQGQKGRQDQSSHQGQKGRQDQSSHQGQK. Residues 467-481 show a composition bias toward basic and acidic residues; it reads GRQDQSSHQGQREGQ. 2 stretches are compositionally biased toward polar residues: residues 482 to 535 and 543 to 570; these read DQNS…SFHY and LSSH…QSFH. 2 stretches are compositionally biased toward polar residues: residues 587 to 606 and 616 to 643; these read DRQS…QSFH and GSHQ…SSQQ. The segment covering 710–726 has biased composition (polar residues); that stretch reads DLSSHQGQKGRQDQSPH. Composition is skewed to basic and acidic residues over residues 731-747 and 755-769; these read GRHD…RQDQ and GRQD…REGQ. Composition is skewed to polar residues over residues 795–822, 833–848, and 855–864; these read LSSH…QSFH, SHHG…SHCG, and TENQGQNRHS. A compositionally biased stretch (basic and acidic residues) spans 865 to 875; sequence LGTDRTRRDSY. The span at 876–889 shows a compositional bias: polar residues; that stretch reads VEQSGRSVKLSQQN. Composition is skewed to basic and acidic residues over residues 890-908, 947-965, 978-998, 1005-1045, and 1056-1065; these read SREE…RREQ, EQDH…HSVE, THEE…DEQN, QTHE…KEKY, and PNREKSHMSE.

This sequence belongs to the S100-fused protein family. In terms of processing, potential substrate of transglutaminase. Some arginines are probably converted to citrullines by peptidylarginine deimidase. Detectable in the stratified internal epithelia of forestomach and tongue and to a lesser degree in normal skin epidermis, where it is restricted to the differentiated suprabasal cell layers. Overexpressed in skin tumors.

Its subcellular location is the secreted. It is found in the extracellular space. The protein resides in the extracellular matrix. Involved in the cornified cell envelope formation. Multifunctional epidermal matrix protein. The polypeptide is Repetin (Rptn) (Mus musculus (Mouse)).